The following is a 307-amino-acid chain: Oxygen-dependent coproporphyrinogen-III oxidase (307 aa).

Ser-97 contributes to the substrate binding site. Positions 101 and 111 each coordinate a divalent metal cation. The active-site Proton donor is His-111. 113–115 is a substrate binding site; it reads NVR. A divalent metal cation-binding residues include His-152 and His-182. Positions 247-282 are important for dimerization; the sequence is YVEFNLVWDRGTHFGLQSGGRTESILMSMPPLASWS. 265 to 267 lines the substrate pocket; sequence GGR.

This sequence belongs to the aerobic coproporphyrinogen-III oxidase family. As to quaternary structure, homodimer. A divalent metal cation serves as cofactor.

The protein localises to the cytoplasm. It catalyses the reaction coproporphyrinogen III + O2 + 2 H(+) = protoporphyrinogen IX + 2 CO2 + 2 H2O. Its pathway is porphyrin-containing compound metabolism; protoporphyrin-IX biosynthesis; protoporphyrinogen-IX from coproporphyrinogen-III (O2 route): step 1/1. Its function is as follows. Involved in the heme biosynthesis. Catalyzes the aerobic oxidative decarboxylation of propionate groups of rings A and B of coproporphyrinogen-III to yield the vinyl groups in protoporphyrinogen-IX. In Polaromonas naphthalenivorans (strain CJ2), this protein is Oxygen-dependent coproporphyrinogen-III oxidase.